We begin with the raw amino-acid sequence, 468 residues long: Cysteine--tRNA ligase (468 aa).

Cys33 provides a ligand contact to Zn(2+). Residues Ala35–His45 carry the 'HIGH' region motif. 3 residues coordinate Zn(2+): Cys211, His236, and Glu240. A 'KMSKS' region motif is present at residues Lys267–Ser271. Position 270 (Lys270) interacts with ATP.

Belongs to the class-I aminoacyl-tRNA synthetase family. In terms of assembly, monomer. The cofactor is Zn(2+).

The protein localises to the cytoplasm. It carries out the reaction tRNA(Cys) + L-cysteine + ATP = L-cysteinyl-tRNA(Cys) + AMP + diphosphate. The chain is Cysteine--tRNA ligase from Mycobacterium marinum (strain ATCC BAA-535 / M).